A 298-amino-acid chain; its full sequence is Centromere protein O (298 aa).

The tract at residues 29 to 49 (NISNRKSEEPAVRKKESSLRT) is disordered. Over residues 33 to 49 (RKSEEPAVRKKESSLRT) the composition is skewed to basic and acidic residues. Residue S35 is modified to Phosphoserine. A coiled-coil region spans residues 39-74 (AVRKKESSLRTKIRELRQQRDKLRAEVKQWGARVKE).

This sequence belongs to the CENP-O/MCM21 family. As to quaternary structure, component of the CENPA-CAD complex, composed of CENPI, CENPK, CENPL, CENPO, CENPP, CENPQ, CENPR and CENPS. The CENPA-CAD complex interacts with the CENPA-NAC complex, at least composed of CENPA, CENPC, CENPH, CENPM, CENPN, CENPT and CENPU.

It localises to the nucleus. It is found in the chromosome. The protein localises to the centromere. The protein resides in the kinetochore. In terms of biological role, component of the CENPA-CAD (nucleosome distal) complex, a complex recruited to centromeres which is involved in assembly of kinetochore proteins, mitotic progression and chromosome segregation. May be involved in incorporation of newly synthesized CENPA into centromeres via its interaction with the CENPA-NAC complex. Modulates the kinetochore-bound levels of NDC80 complex. This Mus musculus (Mouse) protein is Centromere protein O (Cenpo).